Here is a 943-residue protein sequence, read N- to C-terminus: Isoleucine--tRNA ligase 1 (943 aa).

Positions 58–68 (PYANGTIHIGH) match the 'HIGH' region motif. Glutamate 567 provides a ligand contact to L-isoleucyl-5'-AMP. Positions 608–612 (KMSKS) match the 'KMSKS' region motif. Residue lysine 611 participates in ATP binding. Positions 906, 909, 926, and 929 each coordinate Zn(2+).

Belongs to the class-I aminoacyl-tRNA synthetase family. IleS type 1 subfamily. As to quaternary structure, monomer. It depends on Zn(2+) as a cofactor.

It is found in the cytoplasm. The enzyme catalyses tRNA(Ile) + L-isoleucine + ATP = L-isoleucyl-tRNA(Ile) + AMP + diphosphate. Functionally, catalyzes the attachment of isoleucine to tRNA(Ile). As IleRS can inadvertently accommodate and process structurally similar amino acids such as valine, to avoid such errors it has two additional distinct tRNA(Ile)-dependent editing activities. One activity is designated as 'pretransfer' editing and involves the hydrolysis of activated Val-AMP. The other activity is designated 'posttransfer' editing and involves deacylation of mischarged Val-tRNA(Ile). Confers resistance to the antibiotic mupirocin (pseudomonic acid A), an Ile-analog produced by P.fluorescens NCIMB 10586 itself that competitively inhibits activation by Ile-tRNA synthetase, thus inhibiting protein biosynthesis. The protein is Isoleucine--tRNA ligase 1 (ileS1) of Pseudomonas fluorescens.